The sequence spans 361 residues: MSVQVSPEQMATLKATLLNTPGNVPLHERFRALFMLKAVGGDEVVDIVSEGLKDPSPLLKHELAYVLGQLLNTRALPTLSRVLENPTGEHCSMVRHEAAEALGAIGAEESLPILRKYMQDENREVRETCEIAVGKIEFDLSEEGKKTNANPDFPTIDPAPSAAPSDIPSLRADLLNTSLPLFQRYRAMFALRDFGAGSKEAVEALADGFRDGSALFRHEIAYIFGQLSSPYSIPSLLSRLRDAKEDDMVRHEAAEALGGIASDGVESENPEVVLPEDERLPEGGVLAVLREWAVKADAPTVVRESCQVAIDMWEYENSADQFNPLDSLSAKQEEREKTEKVNTTGMERSAHAAVAAMGIAA.

HEAT-like PBS-type repeat units lie at residues 59–85, 94–120, 183–211, and 216–242; these read LKHELAYVLGQLLNTRALPTLSRVLEN, VRHEAAEALGAIGAEESLPILRKYMQD, QRYRAMFALRDFGAGSKEAVEALADGFRD, and FRHEIAYIFGQLSSPYSIPSLLSRLRD. Fe cation-binding residues include H61, E62, H96, and E97. Residues H218, E219, H251, and E252 each coordinate Fe cation.

The protein belongs to the deoxyhypusine hydroxylase family. It depends on Fe(2+) as a cofactor.

The protein localises to the cytoplasm. The protein resides in the nucleus. It catalyses the reaction [eIF5A protein]-deoxyhypusine + AH2 + O2 = [eIF5A protein]-hypusine + A + H2O. It participates in protein modification; eIF5A hypusination. Functionally, catalyzes the hydroxylation of the N(6)-(4-aminobutyl)-L-lysine intermediate to form hypusine, an essential post-translational modification only found in mature eIF-5A factor. The sequence is that of Deoxyhypusine hydroxylase from Cryptococcus neoformans var. neoformans serotype D (strain JEC21 / ATCC MYA-565) (Filobasidiella neoformans).